A 188-amino-acid polypeptide reads, in one-letter code: Putative manganese efflux pump MntP (188 aa).

The next 6 helical transmembrane spans lie at 3–23 (ISAT…ASIG), 41–61 (LIFG…GMLA), 62–82 (SQFI…FLGG), 106–128 (WILV…GLAF), 143–163 (ATLI…PLLG), and 168–188 (ILGG…HFAG).

This sequence belongs to the MntP (TC 9.B.29) family.

It is found in the cell inner membrane. Its function is as follows. Probably functions as a manganese efflux pump. This Enterobacter sp. (strain 638) protein is Putative manganese efflux pump MntP.